The following is a 308-amino-acid chain: Coenzyme PQQ synthesis protein B (308 aa).

This sequence belongs to the PqqB family.

Its pathway is cofactor biosynthesis; pyrroloquinoline quinone biosynthesis. Its function is as follows. May be involved in the transport of PQQ or its precursor to the periplasm. The sequence is that of Coenzyme PQQ synthesis protein B from Klebsiella pneumoniae (strain 342).